A 62-amino-acid chain; its full sequence is Protein YnfQ (62 aa).

It belongs to the YmcF/YnqF peptide family.

This Escherichia coli (strain K12) protein is Protein YnfQ.